Consider the following 817-residue polypeptide: E3 ubiquitin-protein ligase TRIM9 (817 aa).

The segment at 10 to 50 (CPVCGSFYREPIILPCSHNLCQACARNILVQTPESESPQSR) adopts an RING-type zinc-finger fold. At threonine 41 the chain carries Phosphothreonine. Residues serine 44, serine 46, serine 49, and serine 53 each carry the phosphoserine modification. B box-type zinc fingers lie at residues 163 to 212 (AAAL…LVPP) and 224 to 266 (RKVS…VKAL). Zn(2+) is bound by residues cysteine 168, cysteine 171, cysteine 193, histidine 198, cysteine 229, histidine 232, cysteine 252, and histidine 258. The stretch at 273-340 (HKSQLSQALN…KAQLLARVNK (68 aa)) forms a coiled coil. Positions 374–432 (IKENDPSGFLQISDALIRRVHLTEDQWGKGTLTPRMTTDFDLSLDNSPLLQSIHQLDFV) constitute a COS domain. The Fibronectin type-III domain occupies 440–535 (VPATPILQLE…KTLVLQTSEA (96 aa)). The interval 535-557 (AAGAHETKPMKDTDSEEQTLPFP) is disordered. The span at 537 to 547 (GAHETKPMKDT) shows a compositional bias: basic and acidic residues. The B30.2/SPRY domain occupies 613 to 794 (ETQSASYSQL…VQVSLWAPGL (182 aa)).

The protein belongs to the TRIM/RBCC family. In terms of assembly, interacts with SNAP25. Auto-ubiquitinated. Brain. Expression is higher in the cerebral cortex and hippocampus (at protein level). Its expression is mainly confined to the central nervous system. The developing neocortex, the dorsal thalamus, the midbrain, the basal area of the hindbrain and spinal cord show high level of expression during embryogenesis. In adult brain, it is detected in the Purkinje cells of the cerebellum, in the hippocampus, and in the cortex.

Its subcellular location is the cytoplasm. The protein localises to the cell projection. It is found in the dendrite. The protein resides in the cytoplasmic vesicle. It localises to the secretory vesicle. Its subcellular location is the synaptic vesicle. The protein localises to the synapse. It is found in the cytoskeleton. The catalysed reaction is S-ubiquitinyl-[E2 ubiquitin-conjugating enzyme]-L-cysteine + [acceptor protein]-L-lysine = [E2 ubiquitin-conjugating enzyme]-L-cysteine + N(6)-ubiquitinyl-[acceptor protein]-L-lysine.. Its pathway is protein modification; protein ubiquitination. E3 ubiquitin-protein ligase which ubiquitinates itself in cooperation with an E2 enzyme UBE2D2/UBC4 and serves as a targeting signal for proteasomal degradation. May play a role in regulation of neuronal functions. May act as a regulator of synaptic vesicle exocytosis by controlling the availability of SNAP25 for the SNARE complex formation. In Mus musculus (Mouse), this protein is E3 ubiquitin-protein ligase TRIM9 (Trim9).